Here is a 350-residue protein sequence, read N- to C-terminus: Glycolate oxidase subunit GlcE (350 aa).

One can recognise an FAD-binding PCMH-type domain in the interval M1–R173.

In terms of assembly, the glycolate oxidase likely consists of three subunits, GlcD, GlcE and GlcF. FAD is required as a cofactor.

Its subcellular location is the cell inner membrane. It catalyses the reaction glycolate + A = glyoxylate + AH2. The enzyme catalyses (R)-lactate + A = pyruvate + AH2. Its activity is regulated as follows. In vitro the glycolate oxidase activity is inhibited by the sulfhydryl inhibitors CuSO4 and PCMB, by KCN, but not by the metal complexing agent EDTA. Functionally, component of a complex that catalyzes the oxidation of glycolate to glyoxylate. Is required for E.coli to grow on glycolate as a sole source of carbon. Is also able to oxidize D-lactate ((R)-lactate) with a similar rate. Does not link directly to O(2), and 2,6-dichloroindophenol (DCIP) and phenazine methosulfate (PMS) can act as artificial electron acceptors in vitro, but the physiological molecule that functions as a primary electron acceptor during glycolate oxidation is unknown. This is Glycolate oxidase subunit GlcE from Escherichia coli (strain K12).